Consider the following 208-residue polypeptide: NAD(P)H-quinone oxidoreductase subunit I (208 aa).

4Fe-4S ferredoxin-type domains follow at residues 55–84 and 95–124; these read GRIH…VDWV and RNYS…MTEE. Positions 64, 67, 70, 74, 104, 107, 110, and 114 each coordinate [4Fe-4S] cluster.

The protein belongs to the complex I 23 kDa subunit family. NDH-1 is composed of at least 11 different subunits. [4Fe-4S] cluster serves as cofactor.

It is found in the cellular thylakoid membrane. It catalyses the reaction a plastoquinone + NADH + (n+1) H(+)(in) = a plastoquinol + NAD(+) + n H(+)(out). The catalysed reaction is a plastoquinone + NADPH + (n+1) H(+)(in) = a plastoquinol + NADP(+) + n H(+)(out). NDH-1 shuttles electrons from an unknown electron donor, via FMN and iron-sulfur (Fe-S) centers, to quinones in the respiratory and/or the photosynthetic chain. The immediate electron acceptor for the enzyme in this species is believed to be plastoquinone. Couples the redox reaction to proton translocation, and thus conserves the redox energy in a proton gradient. The polypeptide is NAD(P)H-quinone oxidoreductase subunit I (Prochlorococcus marinus (strain MIT 9215)).